We begin with the raw amino-acid sequence, 586 residues long: MKTRPQALGLGEPYPGRAHSLVVQIPTWADMVAFGQGKAAAQMNHGYPRSVVHPDIRSLGSTILAKIHHKTAEAAPSSSLLLFSGVKAALCCKHYILRCMQGRDQGVLEDCVRVYEVSFGSSCMCRDHHHHHHHDDAHSGSPTLYAVLYPSAAAADAHAFWQRTGPGISSRLAQHCLRLQQQGSGPRVGALPAAASTASPMGSSLPDSHPVYAELRRRIAGYAQHSADEPPMTQPVTAPDVFLYGSGMAAIYHVHQAILAWRSGMSVHAGLLYEPTLRILQTHGPGVRSYSLGTAAELDELAAHLEQERVSGSPCAVPAIWCECPSNPILQTVDLQRLRALADQHDLLVVVDDSVASFANVDLLGVADIVVSSLSKYFSGYADVMAGSAILNPRSRHHATLLNQMARTHENSLFVDDALRLERNSRDFPARMARINATTESLVQQLGPRVADPKCPLTRLLYPSRCTSRGYYEGQMRWSSSSSPGAESRPRPGYGGVFSMEFADCGCAAAFFDHLEVYKGLSFGADVCIAAAYVQMTGRQNAPGTAHETLIRFSVGLEPAEEMLLRVETALEAAGRVFLAQGSRKP.

The disordered stretch occupies residues 187–206; it reads RVGALPAAASTASPMGSSLP. The segment covering 196 to 206 has biased composition (polar residues); that stretch reads STASPMGSSLP.

This sequence belongs to the trans-sulfuration enzymes family. Pyridoxal 5'-phosphate is required as a cofactor.

It catalyses the reaction L-alanine = D-alanine. The protein operates within secondary metabolite biosynthesis. Alanine racemase; part of the gene cluster that mediates the biosynthesis of the unguisins, gamma-aminobutyric acid (GABA)-containing fungal cyclic heptapeptides with the amino acid sequence cyclo-(D-Ala1-D-Val2-L-Phe3-D-Val4-D-Ala5-D-Trp6-GABA7) for unguisin A and cyclo-(D-Ala1-D-Val2-L-Leu3-D-Val4-D-Ala5-D-Trp6-GABA7) for unguisin B. Within the pathway, the alanine racemase ungC catalyzes the interconversion of L-alanine and D-alanine, providing the D-alanine which is accepted by the first adenylation domain of the nonribosomal peptide synthetase (NRPS) ungA. UngA is the main enzyme within the cluster which condenses the 7 residues using its respective 7 modules. The terminal condensation domain (Ct) is involved in cyclization with D-alanine and thereby releasing of unguisins A and B. Finally, the hydrolase ungD catalyzes the hydrolysis between the D-tryptophan and GABA residues of unguisins A and B to produce the corresponding linear peptides. The polypeptide is Alanine racemase ungC (Aspergillus violaceofuscus (strain CBS 115571)).